The sequence spans 148 residues: Cuticle protein 8 (148 aa).

Tandem repeats lie at residues 16-19 (AAPA), alanine 22, 28-31 (AAPV), 37-40 (AAPA), and 44-47 (AAPV). The Chitin-binding type R&amp;R domain maps to 58–128 (YPKYEFNYGV…RTPGTHPVAV (71 aa)).

In terms of biological role, component of the cuticle of migratory locust which contains more than 100 different structural proteins. This Locusta migratoria (Migratory locust) protein is Cuticle protein 8.